A 203-amino-acid polypeptide reads, in one-letter code: UDP-N-acetylglucosamine transferase subunit ALG13 (203 aa).

It belongs to the glycosyltransferase 28 family. Heterodimer with ALG14 to form a functional enzyme.

The protein resides in the endoplasmic reticulum. It catalyses the reaction an N-acetyl-alpha-D-glucosaminyl-diphospho-di-trans,poly-cis-dolichol + UDP-N-acetyl-alpha-D-glucosamine = an N,N'-diacetylchitobiosyl-diphospho-di-trans,poly-cis-dolichol + UDP + H(+). Involved in protein N-glycosylation. Essential for the second step of the dolichol-linked oligosaccharide pathway. The chain is UDP-N-acetylglucosamine transferase subunit ALG13 (ALG13) from Eremothecium gossypii (strain ATCC 10895 / CBS 109.51 / FGSC 9923 / NRRL Y-1056) (Yeast).